Here is a 352-residue protein sequence, read N- to C-terminus: Photosystem II D2 protein (352 aa).

A helical transmembrane segment spans residues 40-60 (CAYLAVGAWFTGTTFVTSWYT). His-117 contributes to the chlorophyll a binding site. A helical membrane pass occupies residues 124-140 (GFTLRQFEIARLIGLRP). The pheophytin a site is built by Gln-129 and Asn-142. A helical membrane pass occupies residues 152–165 (VFVSVFLLYPLGQA). His-197 lines the chlorophyll a pocket. The helical transmembrane segment at 207 to 227 (AALLCAIHGATVENTLFEDGD) threads the bilayer. A plastoquinone contacts are provided by His-214 and Phe-261. Position 214 (His-214) interacts with Fe cation. His-268 provides a ligand contact to Fe cation. Residues 278–294 (GLWMSAIGVVGLGVNLR) form a helical membrane-spanning segment.

It belongs to the reaction center PufL/M/PsbA/D family. PSII is composed of 1 copy each of membrane proteins PsbA, PsbB, PsbC, PsbD, PsbE, PsbF, PsbH, PsbI, PsbJ, PsbK, PsbL, PsbM, PsbT, PsbX, PsbY, PsbZ, Psb30/Ycf12, at least 3 peripheral proteins of the oxygen-evolving complex and a large number of cofactors. It forms dimeric complexes. The D1/D2 heterodimer binds P680, chlorophylls that are the primary electron donor of PSII, and subsequent electron acceptors. It shares a non-heme iron and each subunit binds pheophytin, quinone, additional chlorophylls, carotenoids and lipids. There is also a Cl(-1) ion associated with D1 and D2, which is required for oxygen evolution. The PSII complex binds additional chlorophylls, carotenoids and specific lipids. is required as a cofactor.

It is found in the plastid. It localises to the cyanelle thylakoid membrane. The catalysed reaction is 2 a plastoquinone + 4 hnu + 2 H2O = 2 a plastoquinol + O2. Photosystem II (PSII) is a light-driven water:plastoquinone oxidoreductase that uses light energy to abstract electrons from H(2)O, generating O(2) and a proton gradient subsequently used for ATP formation. It consists of a core antenna complex that captures photons, and an electron transfer chain that converts photonic excitation into a charge separation. The D1/D2 (PsbA/PsbD) reaction center heterodimer binds P680, the primary electron donor of PSII as well as several subsequent electron acceptors. D2 is needed for assembly of a stable PSII complex. In Cyanophora paradoxa, this protein is Photosystem II D2 protein.